Here is a 688-residue protein sequence, read N- to C-terminus: Polyribonucleotide nucleotidyltransferase (688 aa).

Mg(2+) contacts are provided by Asp-484 and Asp-490. Residues 550–609 (PTTEIFNVAPDKIVEIIGQGGRVIKEIVEKFEVKIDLNKPSGEVKIMGNKERVLKTKEFI) form the KH domain. The S1 motif domain occupies 626-688 (DEVLEAQVKR…NKGKIALDLA (63 aa)).

The protein belongs to the polyribonucleotide nucleotidyltransferase family. Mg(2+) is required as a cofactor.

It localises to the cytoplasm. It catalyses the reaction RNA(n+1) + phosphate = RNA(n) + a ribonucleoside 5'-diphosphate. Its function is as follows. Involved in mRNA degradation. Catalyzes the phosphorolysis of single-stranded polyribonucleotides processively in the 3'- to 5'-direction. The sequence is that of Polyribonucleotide nucleotidyltransferase from Helicobacter pylori (strain HPAG1).